Reading from the N-terminus, the 389-residue chain is Phosphopentomutase (389 aa).

Residues Asp-12, Asp-284, His-289, Asp-325, His-326, and His-337 each coordinate Mn(2+).

Belongs to the phosphopentomutase family. The cofactor is Mn(2+).

It is found in the cytoplasm. The enzyme catalyses 2-deoxy-alpha-D-ribose 1-phosphate = 2-deoxy-D-ribose 5-phosphate. It catalyses the reaction alpha-D-ribose 1-phosphate = D-ribose 5-phosphate. It participates in carbohydrate degradation; 2-deoxy-D-ribose 1-phosphate degradation; D-glyceraldehyde 3-phosphate and acetaldehyde from 2-deoxy-alpha-D-ribose 1-phosphate: step 1/2. Its function is as follows. Isomerase that catalyzes the conversion of deoxy-ribose 1-phosphate (dRib-1-P) and ribose 1-phosphate (Rib-1-P) to deoxy-ribose 5-phosphate (dRib-5-P) and ribose 5-phosphate (Rib-5-P), respectively. The chain is Phosphopentomutase from Anaeromyxobacter sp. (strain Fw109-5).